The primary structure comprises 419 residues: Oxamate carbamoyltransferase subunit AllG (419 aa).

The protein belongs to the AllG family. The OXTCase is composed of 3 subunits, AllF, AllG and AllH. The cofactor is Mg(2+).

It carries out the reaction oxamate + carbamoyl phosphate = N-carbamoyl-2-oxoglycine + phosphate. The protein operates within nitrogen metabolism; (S)-allantoin degradation. In terms of biological role, component of a carbamoyltransferase involved in the anaerobic nitrogen utilization via the assimilation of allantoin. Catalyzes the conversion of oxalurate (N-carbamoyl-2-oxoglycine) to oxamate and carbamoyl phosphate. In Escherichia coli (strain K12), this protein is Oxamate carbamoyltransferase subunit AllG.